The following is a 423-amino-acid chain: Polyglutamylase complex subunit TTLL1 (423 aa).

The 367-residue stretch at 1-367 (MAGKVKWVTD…NGEIPDCKWN (367 aa)) folds into the TTL domain. ATP-binding positions include Lys-138, 144-145 (QG), 181-184 (SLYI), and 194-196 (KFD). A protein is bound at residue Gln-144. L-glutamate is bound at residue Arg-220. Residue 241 to 242 (TN) coordinates ATP. Lys-259 lines the L-glutamate pocket. Mg(2+) contacts are provided by Asp-313, Glu-326, and Asn-328. Lys-344 serves as a coordination point for L-glutamate. The segment at 391–423 (GAERELRSRPGQSLGPKGSRLRDAGRTVLTTWK) is disordered.

This sequence belongs to the tubulin polyglutamylase family. As to quaternary structure, part of the neuronal tubulin polyglutamylase complex which contains TPGS1, TPGS2, TTLL1, LRRC49 and NICN1. Interacts with PCM1, CSTPP1 and LRRC49. Mg(2+) is required as a cofactor.

The protein resides in the cytoplasm. It is found in the cytoskeleton. It localises to the cilium basal body. The protein localises to the cilium axoneme. Its subcellular location is the cell projection. The protein resides in the cilium. It is found in the flagellum. It carries out the reaction (L-glutamyl)(n)-gamma-L-glutamyl-L-glutamyl-[protein] + L-glutamate + ATP = (L-glutamyl)(n+1)-gamma-L-glutamyl-L-glutamyl-[protein] + ADP + phosphate + H(+). Its function is as follows. Catalytic subunit of a polyglutamylase complex which modifies tubulin, generating side chains of glutamate on the gamma-carboxyl group of specific glutamate residues within the C-terminal tail of tubulin. Probably involved in the side-chain elongation step of the polyglutamylation reaction rather than the initiation step. Modifies both alpha- and beta-tubulins with a preference for the alpha-tail. Unlike most polyglutamylases of the tubulin--tyrosine ligase family, only displays a catalytic activity when in complex with other proteins as it is most likely lacking domains important for autonomous activity. Part of the neuronal tubulin polyglutamylase complex. Mediates cilia and flagella polyglutamylation which is essential for their biogenesis and motility. Involved in respiratory motile cilia function through the regulation of beating asymmetry. Essential for sperm flagella biogenesis, motility and male fertility. Involved in KLF4 glutamylation which impedes its ubiquitination, thereby leading to somatic cell reprogramming, pluripotency maintenance and embryogenesis. This Bos taurus (Bovine) protein is Polyglutamylase complex subunit TTLL1 (TTLL1).